Here is a 139-residue protein sequence, read N- to C-terminus: Cystatin (139 aa).

The N-terminal stretch at 1 to 23 (MAGARGCVVLLAAALMLVGAVLG) is a signal peptide. A Secondary area of contact motif is present at residues 76–80 (QLVSG). 2 disulfide bridges follow: C94–C104 and C118–C138. The residue at position 103 (S103) is a Phosphoserine.

Belongs to the cystatin family.

The protein resides in the secreted. In terms of biological role, this protein binds tightly to and inhibits a variety of thiol proteases including ficin, papain, and cathepsins B, C, H, and L. Although isolated from egg white, it is also present in serum. This is Cystatin from Gallus gallus (Chicken).